The primary structure comprises 373 residues: Anhydro-N-acetylmuramic acid kinase (373 aa).

12 to 19 (GTSLDGVD) lines the ATP pocket.

It belongs to the anhydro-N-acetylmuramic acid kinase family.

The catalysed reaction is 1,6-anhydro-N-acetyl-beta-muramate + ATP + H2O = N-acetyl-D-muramate 6-phosphate + ADP + H(+). Its pathway is amino-sugar metabolism; 1,6-anhydro-N-acetylmuramate degradation. It functions in the pathway cell wall biogenesis; peptidoglycan recycling. Its function is as follows. Catalyzes the specific phosphorylation of 1,6-anhydro-N-acetylmuramic acid (anhMurNAc) with the simultaneous cleavage of the 1,6-anhydro ring, generating MurNAc-6-P. Is required for the utilization of anhMurNAc either imported from the medium or derived from its own cell wall murein, and thus plays a role in cell wall recycling. This chain is Anhydro-N-acetylmuramic acid kinase, found in Erwinia tasmaniensis (strain DSM 17950 / CFBP 7177 / CIP 109463 / NCPPB 4357 / Et1/99).